Reading from the N-terminus, the 382-residue chain is Adaptive-response sensory kinase SasA (382 aa).

The Histidine kinase domain occupies methionine 160 to arginine 382. Histidine 163 bears the Phosphohistidine; by autocatalysis mark.

As to quaternary structure, homooligomerizes. Interacts with KaiC. Participates in the KaiABC clock complex, whose core is composed of a KaiC homohexamer, 6 KaiB and up to 6 KaiA dimers. SasA and KaiB(fs) compete to bind to KaiC.

The enzyme catalyses ATP + protein L-histidine = ADP + protein N-phospho-L-histidine.. In terms of biological role, member of the two-component regulatory system SasA/RpaA involved in genome-wide circadian gene expression. One of several clock output pathways. Participates in the Kai clock protein complex, the main circadian regulator in cyanobacteria, via its interaction with KaiC. KaiC enhances the autophosphorylation activity of SasA, which then transfers its phosphate group to RpaA to activate it. In addition to its output function, recruits fold-shifted KaiB (KaiB(fs)) to KaiC to cooperatively form the KaiB(6):KaiC(6) complex (independent of SasA kinase activity). Required for robustness of the circadian rhythm of gene expression and is involved in clock output, also required for adaptation to light/dark cycles. This Crocosphaera subtropica (strain ATCC 51142 / BH68) (Cyanothece sp. (strain ATCC 51142)) protein is Adaptive-response sensory kinase SasA.